Here is a 243-residue protein sequence, read N- to C-terminus: uncharacterized protein (243 aa).

A helical transmembrane segment spans residues 55-75 (IILIILLTIFMVISTLVIAFV).

The protein resides in the membrane. This is an uncharacterized protein from Rickettsia prowazekii (strain Madrid E).